A 724-amino-acid chain; its full sequence is Methionine--tRNA ligase (724 aa).

The 'HIGH' region signature appears at 12–22; it reads PYVNNIPHLGN. Cysteine 143, cysteine 146, cysteine 155, and cysteine 158 together coordinate Zn(2+). Residues 330–334 carry the 'KMSKS' region motif; the sequence is KFSKS. Position 333 (lysine 333) interacts with ATP. Residues 560–665 enclose the tRNA-binding domain; that stretch reads FREKVLLRVV…KNPIAGERII (106 aa).

Belongs to the class-I aminoacyl-tRNA synthetase family. MetG type 1 subfamily. As to quaternary structure, homodimer. Requires Zn(2+) as cofactor.

The protein resides in the cytoplasm. The catalysed reaction is tRNA(Met) + L-methionine + ATP = L-methionyl-tRNA(Met) + AMP + diphosphate. Its function is as follows. Is required not only for elongation of protein synthesis but also for the initiation of all mRNA translation through initiator tRNA(fMet) aminoacylation. This Borreliella afzelii (strain PKo) (Borrelia afzelii) protein is Methionine--tRNA ligase.